The primary structure comprises 349 residues: Core protein VP7 (349 aa).

N-linked (GlcNAc...) asparagine; by host glycosylation is present at asparagine 45.

Belongs to the orbivirus VP7 family. In terms of assembly, homotrimer.

The protein localises to the virion. In terms of biological role, major structural core protein; binds to structural protein VP3. Constitutes the surface of the AHSV core. This chain is Core protein VP7 (Segment-7), found in Camelus dromedarius (Dromedary).